The chain runs to 265 residues: 3-methyl-2-oxobutanoate hydroxymethyltransferase (265 aa).

Mg(2+)-binding residues include aspartate 45 and aspartate 84. Residues aspartate 45–serine 46, aspartate 84, and lysine 112 each bind 3-methyl-2-oxobutanoate. Position 114 (glutamate 114) interacts with Mg(2+). Glutamate 182 acts as the Proton acceptor in catalysis.

It belongs to the PanB family. As to quaternary structure, homodecamer; pentamer of dimers. Mg(2+) is required as a cofactor.

The protein resides in the cytoplasm. The enzyme catalyses 3-methyl-2-oxobutanoate + (6R)-5,10-methylene-5,6,7,8-tetrahydrofolate + H2O = 2-dehydropantoate + (6S)-5,6,7,8-tetrahydrofolate. The protein operates within cofactor biosynthesis; (R)-pantothenate biosynthesis; (R)-pantoate from 3-methyl-2-oxobutanoate: step 1/2. Its function is as follows. Catalyzes the reversible reaction in which hydroxymethyl group from 5,10-methylenetetrahydrofolate is transferred onto alpha-ketoisovalerate to form ketopantoate. In Baumannia cicadellinicola subsp. Homalodisca coagulata, this protein is 3-methyl-2-oxobutanoate hydroxymethyltransferase.